We begin with the raw amino-acid sequence, 334 residues long: N-acetyl-gamma-glutamyl-phosphate reductase (334 aa).

Residue cysteine 154 is part of the active site.

Belongs to the NAGSA dehydrogenase family. Type 1 subfamily.

The protein localises to the cytoplasm. It carries out the reaction N-acetyl-L-glutamate 5-semialdehyde + phosphate + NADP(+) = N-acetyl-L-glutamyl 5-phosphate + NADPH + H(+). It participates in amino-acid biosynthesis; L-arginine biosynthesis; N(2)-acetyl-L-ornithine from L-glutamate: step 3/4. In terms of biological role, catalyzes the NADPH-dependent reduction of N-acetyl-5-glutamyl phosphate to yield N-acetyl-L-glutamate 5-semialdehyde. The chain is N-acetyl-gamma-glutamyl-phosphate reductase from Pectobacterium carotovorum subsp. carotovorum (strain PC1).